The chain runs to 182 residues: Probable nicotinate-nucleotide adenylyltransferase (182 aa).

It belongs to the NadD family.

The enzyme catalyses nicotinate beta-D-ribonucleotide + ATP + H(+) = deamido-NAD(+) + diphosphate. The protein operates within cofactor biosynthesis; NAD(+) biosynthesis; deamido-NAD(+) from nicotinate D-ribonucleotide: step 1/1. Its function is as follows. Catalyzes the reversible adenylation of nicotinate mononucleotide (NaMN) to nicotinic acid adenine dinucleotide (NaAD). In Sulfurimonas denitrificans (strain ATCC 33889 / DSM 1251) (Thiomicrospira denitrificans (strain ATCC 33889 / DSM 1251)), this protein is Probable nicotinate-nucleotide adenylyltransferase.